We begin with the raw amino-acid sequence, 351 residues long: Hydroxymethylglutaryl-CoA synthase (351 aa).

The active-site Proton donor/acceptor is the glutamate 80. Catalysis depends on cysteine 112, which acts as the Acyl-thioester intermediate. 2 residues coordinate (3S)-3-hydroxy-3-methylglutaryl-CoA: cysteine 112 and serine 153. Arginine 199 is a CoA binding site. The (3S)-3-hydroxy-3-methylglutaryl-CoA site is built by threonine 201 and histidine 234. Histidine 234 (proton donor/acceptor) is an active-site residue. Position 239 (lysine 239) interacts with CoA. Arginine 243, asparagine 266, and serine 296 together coordinate (3S)-3-hydroxy-3-methylglutaryl-CoA.

The protein belongs to the thiolase-like superfamily. Archaeal HMG-CoA synthase family. In terms of assembly, interacts with acetoacetyl-CoA thiolase that catalyzes the precedent step in the pathway and with a DUF35 protein. The acetoacetyl-CoA thiolase/HMG-CoA synthase complex channels the intermediate via a fused CoA-binding site, which allows for efficient coupling of the endergonic thiolase reaction with the exergonic HMGCS reaction.

It carries out the reaction acetoacetyl-CoA + acetyl-CoA + H2O = (3S)-3-hydroxy-3-methylglutaryl-CoA + CoA + H(+). The protein operates within metabolic intermediate biosynthesis; (R)-mevalonate biosynthesis; (R)-mevalonate from acetyl-CoA: step 2/3. Catalyzes the condensation of acetyl-CoA with acetoacetyl-CoA to form 3-hydroxy-3-methylglutaryl-CoA (HMG-CoA). Functions in the mevalonate (MVA) pathway leading to isopentenyl diphosphate (IPP), a key precursor for the biosynthesis of isoprenoid compounds that are building blocks of archaeal membrane lipids. The protein is Hydroxymethylglutaryl-CoA synthase of Thermoplasma acidophilum (strain ATCC 25905 / DSM 1728 / JCM 9062 / NBRC 15155 / AMRC-C165).